Consider the following 162-residue polypeptide: Cytochrome c-type biogenesis protein CcmE (162 aa).

Residues methionine 1–arginine 7 are Cytoplasmic-facing. The helical; Signal-anchor for type II membrane protein transmembrane segment at leucine 8–alanine 28 threads the bilayer. The Periplasmic segment spans residues leucine 29–glutamine 162. Residues histidine 122 and tyrosine 126 each contribute to the heme site. Residues histidine 140–glutamine 162 form a disordered region.

Belongs to the CcmE/CycJ family.

It is found in the cell inner membrane. Its function is as follows. Heme chaperone required for the biogenesis of c-type cytochromes. Transiently binds heme delivered by CcmC and transfers the heme to apo-cytochromes in a process facilitated by CcmF and CcmH. This chain is Cytochrome c-type biogenesis protein CcmE, found in Nitrobacter winogradskyi (strain ATCC 25391 / DSM 10237 / CIP 104748 / NCIMB 11846 / Nb-255).